Here is a 186-residue protein sequence, read N- to C-terminus: LSM12 homolog B (186 aa).

The region spanning 1–74 (MSSLAPCFTV…CMDIEIVKEA (74 aa)) is the Sm domain. The AD domain occupies 84–186 (EPIDLPMIRE…VVQNFCSKQF (103 aa)).

Belongs to the LSM12 family. As to quaternary structure, interacts with Sbat; along with Sbat and Vlet, may form an accessory subcomplex involved in SMN complex function.

Its function is as follows. May have an accessory function in the survival motor neuron (SMN) complex. In Drosophila melanogaster (Fruit fly), this protein is LSM12 homolog B.